The chain runs to 61 residues: Large ribosomal subunit protein bL32c (61 aa).

The segment at 37 to 61 (SRSFSSGNEHPKPKGFSGQQQQTNK) is disordered.

It belongs to the bacterial ribosomal protein bL32 family.

The protein resides in the plastid. Its subcellular location is the chloroplast. This is Large ribosomal subunit protein bL32c from Agrostis stolonifera (Creeping bentgrass).